Reading from the N-terminus, the 323-residue chain is Flavone synthase cfoJ (323 aa).

FMN serves as cofactor.

The protein operates within secondary metabolite biosynthesis; flavonoid biosynthesis. In terms of biological role, FMN-dependent oxidoreductase; part of the gene cluster that mediates the biosynthesis of chlorflavonin, a fungal flavonoid with acetolactate synthase inhibitory activity. Within the pathway, cfoJ acts as a flavone synthase (FNS) and catalyzes the formation of a double bond between C2 and C3, converting the flavanone into a flavone. The pathway begins with the PKS-NRPS hybrid synthetase cfoA that uses benzoic acid or p-hydroxybenzoic acid as a starter unit with four rounds of chain elongation using malonyl-CoA to form the chalcone skeleton. Then, a new type of chalcone isomerase, cfoK, catalyzes the conversion of the chalcone into a flavanone by a histidine-mediated oxa-Michael addition mechanism. The desaturation of flavanone to flavone is catalyzed by a new type of flavone synthase, the flavin mononucleotide (FMN)-dependent oxidoreductase cfoJ. Monooxygenases cfoF, cfoG, and P450 cfoH are responsible for the hydroxylation of the flavonoid skeleton at sites C3, C8, and C2', respectively. Like cfoF, the dehydratase cfoI plays also a role in the hydroxylation of position C3. Methyltransferases cfoB, cfoC, and cfoD then catalyze the methylation of C7-OH, C8-OH, and C3-OH, respectively. Finally, the monooxygenase cfoE is responsible for the chlorination of flavonoid at position C3'. This is Flavone synthase cfoJ from Aspergillus candidus.